The sequence spans 318 residues: Adenylate isopentenyltransferase 4 (318 aa).

Residue 12 to 19 (GATGSGKS) participates in ATP binding.

This sequence belongs to the IPP transferase family. Requires Mg(2+) as cofactor. In terms of tissue distribution, expressed in immature seeds with highest expression in the chalazal endosperm.

The protein resides in the cytoplasm. The enzyme catalyses dimethylallyl diphosphate + ADP = N(6)-(dimethylallyl)adenosine 5'-diphosphate + diphosphate. The catalysed reaction is dimethylallyl diphosphate + ATP = N(6)-(dimethylallyl)adenosine 5'-triphosphate + diphosphate. Its function is as follows. Involved in cytokinin biosynthesis. Catalyzes the transfer of an isopentenyl group from dimethylallyl diphosphate (DMAPP) to ATP and ADP, but not to AMP. Has no DMAPP:tRNA isopentenyltransferase activity. This is Adenylate isopentenyltransferase 4 (IPT4) from Arabidopsis thaliana (Mouse-ear cress).